The chain runs to 175 residues: Nucleoside triphosphate/diphosphate phosphatase (175 aa).

Arg-23 acts as the Proton donor in catalysis. The Mg(2+) site is built by Asn-87, Asp-103, Asp-105, Asp-107, Asp-120, and Glu-123.

This sequence belongs to the Ntdp family. The cofactor is Mg(2+).

The enzyme catalyses a ribonucleoside 5'-triphosphate + H2O = a ribonucleoside 5'-diphosphate + phosphate + H(+). The catalysed reaction is a ribonucleoside 5'-diphosphate + H2O = a ribonucleoside 5'-phosphate + phosphate + H(+). Has nucleoside phosphatase activity towards nucleoside triphosphates and nucleoside diphosphates. In Oceanobacillus iheyensis (strain DSM 14371 / CIP 107618 / JCM 11309 / KCTC 3954 / HTE831), this protein is Nucleoside triphosphate/diphosphate phosphatase.